The chain runs to 956 residues: Glutamate receptor ionotropic, kainate 4 (956 aa).

The first 20 residues, 1-20, serve as a signal peptide directing secretion; it reads MPRVSAPLVLLPAWLLMVAC. The Extracellular segment spans residues 21-545; sequence SPHSLRIAAI…YFSSLDPFSP (525 aa). N-linked (GlcNAc...) asparagine glycans are attached at residues Asn-158, Asn-220, Asn-272, Asn-286, Asn-323, Asn-408, Asn-415, and Asn-479. The L-glutamate site is built by Gly-500, Thr-502, and Arg-507. Residues 546–566 traverse the membrane as a helical segment; the sequence is GVWLFMLLAYLAVSCVLFLVA. The Cytoplasmic segment spans residues 567–623; sequence RLTPYEWYSPHPCAQGRCNLLVNQYSLGNSLWFPVGGFMQQGSTIAPRALSTRCVSG. Residues 624–644 form a helical membrane-spanning segment; it reads VWWAFTLIIISSYTANLAAFL. Residues 645 to 804 are Extracellular-facing; the sequence is TVQRMEVPIE…HRAKGLGMEN (160 aa). 3 residues coordinate L-glutamate: Ser-674, Ser-675, and Glu-723. A glycan (N-linked (GlcNAc...) asparagine) is linked at Asn-736. A helical membrane pass occupies residues 805–825; that stretch reads IGGIFVVLICGLIVAIFMAML. Residues 826 to 956 lie on the Cytoplasmic side of the membrane; sequence EFLWTLRHSE…DKTTNSSEPE (131 aa). The interval 931-956 is disordered; it reads LRARPSPARSEESLEWDKTTNSSEPE. Over residues 939 to 948 the composition is skewed to basic and acidic residues; that stretch reads RSEESLEWDK.

The protein belongs to the glutamate-gated ion channel (TC 1.A.10.1) family. GRIK4 subfamily. Homodimer. Can form functional heteromeric receptors with GRIK1, GRIK2 and GRIK3. Strong expression in hippocampal CA3 pyramidal cells. Low expression in hippocampal dentate granule cells, in layers II, V and VI of the cortex, and in cerebellar Purkinje cells. No expression in the striatum, reticular thalamus, hypothalamus or amygdaloid complex.

The protein localises to the cell membrane. Its subcellular location is the postsynaptic cell membrane. It localises to the presynaptic cell membrane. Its function is as follows. Ionotropic glutamate receptor that functions as a cation-permeable ligand-gated ion channel, gated by L-glutamate and the glutamatergic agonist kainic acid. Cannot form functional channels on its own and shows channel activity only in heteromeric assembly with GRIK1, GRIK2 and GRIK3 subunits. This chain is Glutamate receptor ionotropic, kainate 4 (Grik4), found in Rattus norvegicus (Rat).